The primary structure comprises 504 residues: Alpha-L-arabinofuranosidase C (504 aa).

N-linked (GlcNAc...) asparagine glycosylation is found at asparagine 81, asparagine 152, asparagine 269, and asparagine 329.

This sequence belongs to the glycosyl hydrolase 51 family.

The protein resides in the secreted. The enzyme catalyses Hydrolysis of terminal non-reducing alpha-L-arabinofuranoside residues in alpha-L-arabinosides.. Its pathway is glycan metabolism; L-arabinan degradation. Its function is as follows. Alpha-L-arabinofuranosidase involved in the degradation of arabinoxylan, a major component of plant hemicellulose. Acts only on small linear 1,5-alpha-linked L-arabinofuranosyl oligosaccharides. In Emericella nidulans (strain FGSC A4 / ATCC 38163 / CBS 112.46 / NRRL 194 / M139) (Aspergillus nidulans), this protein is Alpha-L-arabinofuranosidase C (abfC).